A 27-amino-acid polypeptide reads, in one-letter code: Small integral membrane protein 43 (27 aa).

Residues 15–21 (HREPWGF) form an important for interaction with SLC2A1 and SLC2A3 region.

In terms of assembly, interacts with glucose transporters SLC2A1/GLUT1 and SLC2A3/GLUT3; the interactions may promote SLC2A1- and SLC2A3-mediated glucose transport to meet the energy needs of mesendoderm differentiation.

Its subcellular location is the cell membrane. Functionally, required for mesendoderm differentiation. Interacts with glucose transporters and promotes glucose uptake. Probably augments the glucose uptake capacity of glucose transporter proteins to meet the energy needs of mesendoderm differentiation. The protein is Small integral membrane protein 43 of Pongo abelii (Sumatran orangutan).